A 95-amino-acid polypeptide reads, in one-letter code: Feather keratin B-4 (95 aa).

At serine 1 the chain carries N-acetylserine.

Belongs to the avian keratin family. As to quaternary structure, the avian keratins (F-ker, S-ker, C-ker and B-ker) are a complex mixture of very similar polypeptides.

The protein is Feather keratin B-4 of Columba livia (Rock dove).